The primary structure comprises 240 residues: Ribonuclease 3 (240 aa).

In terms of domain architecture, RNase III spans 13-143 (DHASLLEALG…LLGAVHLQHG (131 aa)). Residue E53 coordinates Mg(2+). Residue D57 is part of the active site. Residues D129 and E132 each contribute to the Mg(2+) site. E132 is an active-site residue. In terms of domain architecture, DRBM spans 170–238 (DWKTSLQELT…AGAAYQALTA (69 aa)).

It belongs to the ribonuclease III family. In terms of assembly, homodimer. Mg(2+) serves as cofactor.

It localises to the cytoplasm. The enzyme catalyses Endonucleolytic cleavage to 5'-phosphomonoester.. In terms of biological role, digests double-stranded RNA. Involved in the processing of primary rRNA transcript to yield the immediate precursors to the large and small rRNAs (23S and 16S). Processes some mRNAs, and tRNAs when they are encoded in the rRNA operon. Processes pre-crRNA and tracrRNA of type II CRISPR loci if present in the organism. The chain is Ribonuclease 3 from Nocardia farcinica (strain IFM 10152).